The primary structure comprises 317 residues: Methionyl-tRNA formyltransferase (317 aa).

Position 113–116 (serine 113–proline 116) interacts with (6S)-5,6,7,8-tetrahydrofolate.

The protein belongs to the Fmt family.

The enzyme catalyses L-methionyl-tRNA(fMet) + (6R)-10-formyltetrahydrofolate = N-formyl-L-methionyl-tRNA(fMet) + (6S)-5,6,7,8-tetrahydrofolate + H(+). Attaches a formyl group to the free amino group of methionyl-tRNA(fMet). The formyl group appears to play a dual role in the initiator identity of N-formylmethionyl-tRNA by promoting its recognition by IF2 and preventing the misappropriation of this tRNA by the elongation apparatus. This is Methionyl-tRNA formyltransferase from Pseudomonas fluorescens (strain SBW25).